The primary structure comprises 87 residues: MKTFDDLFGELTRIAAERPEGSGTVRELDGGVHAIGKKVVEEAAEVWMAAEHESDDRAAEEISQLLYHVQVMMIARGLTLEDVGRHL.

Belongs to the PRA-PH family.

The protein resides in the cytoplasm. The enzyme catalyses 1-(5-phospho-beta-D-ribosyl)-ATP + H2O = 1-(5-phospho-beta-D-ribosyl)-5'-AMP + diphosphate + H(+). The protein operates within amino-acid biosynthesis; L-histidine biosynthesis; L-histidine from 5-phospho-alpha-D-ribose 1-diphosphate: step 2/9. The protein is Phosphoribosyl-ATP pyrophosphatase of Clavibacter sepedonicus (Clavibacter michiganensis subsp. sepedonicus).